A 212-amino-acid polypeptide reads, in one-letter code: Pyridoxine/pyridoxamine 5'-phosphate oxidase (212 aa).

Substrate contacts are provided by residues 8 to 11 (RRTY) and K66. Residues 61-66 (RIVLLK), 76-77 (FT), R82, K83, and Q105 each bind FMN. Y123, R127, and S131 together coordinate substrate. FMN contacts are provided by residues 140–141 (QS) and W184. 190 to 192 (RLH) is a substrate binding site. R194 is a binding site for FMN.

It belongs to the pyridoxamine 5'-phosphate oxidase family. In terms of assembly, homodimer. Requires FMN as cofactor.

It carries out the reaction pyridoxamine 5'-phosphate + O2 + H2O = pyridoxal 5'-phosphate + H2O2 + NH4(+). The catalysed reaction is pyridoxine 5'-phosphate + O2 = pyridoxal 5'-phosphate + H2O2. It participates in cofactor metabolism; pyridoxal 5'-phosphate salvage; pyridoxal 5'-phosphate from pyridoxamine 5'-phosphate: step 1/1. The protein operates within cofactor metabolism; pyridoxal 5'-phosphate salvage; pyridoxal 5'-phosphate from pyridoxine 5'-phosphate: step 1/1. Its function is as follows. Catalyzes the oxidation of either pyridoxine 5'-phosphate (PNP) or pyridoxamine 5'-phosphate (PMP) into pyridoxal 5'-phosphate (PLP). In Cupriavidus pinatubonensis (strain JMP 134 / LMG 1197) (Cupriavidus necator (strain JMP 134)), this protein is Pyridoxine/pyridoxamine 5'-phosphate oxidase.